The sequence spans 551 residues: Probable inorganic carbon transporter subunit DabB2 (551 aa).

14 helical membrane passes run 6-26, 42-62, 65-85, 86-106, 132-152, 187-207, 217-237, 252-272, 284-304, 321-341, 374-394, 404-424, 434-454, and 469-489; these read SHTT…AAVI, VQWT…SFLF, QQNL…LALS, IQVN…LSVI, GFFL…AIIA, LLLA…FSQI, LSIA…LKSA, PTPV…IIVL, ALLL…LVML, LGFM…LHLV, VVAW…IAAA, MLPA…LKAL, VAAG…EVFI, and PLLD…VAWL.

It belongs to the inorganic carbon transporter (TC 9.A.2) DabB family. As to quaternary structure, forms a complex with DabA2, possibly a heterodimer.

It localises to the cell inner membrane. Its activity is regulated as follows. Uptake of inorganic carbon by cells in the presence of thiosulphate is fully inhibited by the uncouplers carbonyl cyanide m-chlorophenyl hydrazone (CCCP), carbonyl cyanide p-trifluoromethoxyphenyl hydrazone (FCCP), S13 or SF6847. Not inhibited by the ATPase inhibitor N,N-dicyclohexylcarbodiimide (DCCD). Inorganic carbon uptake is inhibited by the ionophore carbonyl cyanide m-chlorophenyl hydrazone (CCCP), suggesting uptake is coupled to a cation gradient. Functionally, part of an energy-coupled inorganic carbon pump; its substrate may be carbon dioxide. Expression of both dabA2 and dabB2 (DAB2) restores growth in ambient air to E.coli deleted of its carbonic anhydrase genes (called CAfree, deletion of 'can' and 'cynT'); neither dabA2 or dabB2 alone is sufficient. Rescue is pH-independent, suggesting it transports CO(2) and not carbonate ions. Together the genes allow greater than normal uptake of inorganic carbon by E.coli. Uptake of carbon dioxide rather than bicarbonate has been suggested based on kinetic calculations. The sequence is that of Probable inorganic carbon transporter subunit DabB2 from Halothiobacillus neapolitanus (strain ATCC 23641 / c2) (Thiobacillus neapolitanus).